Consider the following 119-residue polypeptide: Beta-2-microglobulin (119 aa).

The first 20 residues, 1 to 20, serve as a signal peptide directing secretion; sequence MARFVVVPLLVLVSLFGLEA. The Ig-like C1-type domain occupies 25–114; sequence PKIQVYSRYP…VTFSTPKTVK (90 aa). A disulfide bridge links cysteine 45 with cysteine 100.

This sequence belongs to the beta-2-microglobulin family. As to quaternary structure, heterodimer of an alpha chain and a beta chain. Beta-2-microglobulin is the beta-chain of major histocompatibility complex class I molecules.

The protein localises to the secreted. Component of the class I major histocompatibility complex (MHC). Involved in the presentation of peptide antigens to the immune system. This is Beta-2-microglobulin (B2M) from Saguinus oedipus (Cotton-top tamarin).